The following is a 322-amino-acid chain: MGMLARVALGLIIIDAVLAAPTTELFNYDSEVYDAILEDTGTFYNYEHIPDNHVENEKVSERLSGNRELLTPGPQLGDNQDEDKDEESTPRLIDGSSPQEPEFPGLLGPHTNEDFPTCLLCTCISTTVYCDDHELDAIPPLPKKTTYFYSRFNRIKKINKNDFASLNDLKRIDLTSNLISEIDEDAFRKLPHLQELVLRDNKIKQLPELPNTLTFIDISNNRLGRKGIKQEAFKDMYDLHHLYITDNSLDHIPLPLPESLRALHLQNNDILEMHEDTFCNVKNLTYVRKALEDIRLDGNPINLSRTPQAYMCLPRLPIGSFI.

Positions 1–19 (MGMLARVALGLIIIDAVLA) are cleaved as a signal peptide. The segment at 58 to 108 (KVSERLSGNRELLTPGPQLGDNQDEDKDEESTPRLIDGSSPQEPEFPGLLG) is disordered. O-linked (Xyl...) (dermatan sulfate) serine glycosylation occurs at serine 64. O-linked (GalNAc...) serine glycosylation occurs at serine 96. One can recognise an LRRNT domain in the interval 106–143 (LLGPHTNEDFPTCLLCTCISTTVYCDDHELDAIPPLPK). Cysteine 118 and cysteine 130 are joined by a disulfide. LRR repeat units follow at residues 144–165 (KTTY…DFAS), 168–189 (DLKR…AFRK), 192–213 (HLQE…PNTL), 238–258 (DLHH…PLPE), and 259–280 (SLRA…TFCN). Cysteine 279 and cysteine 312 form a disulfide bridge. Asparagine 283 and asparagine 302 each carry an N-linked (GlcNAc...) asparagine glycan. The stretch at 290 to 310 (ALEDIRLDGNPINLSRTPQAY) is one LRR 6 repeat.

It belongs to the small leucine-rich proteoglycan (SLRP) family. SLRP class III subfamily. In terms of processing, the O-linked polysaccharide on Ser-96 is probably the mucin type linked to GalNAc. There is one glycosaminoglycan chain, known to be dermatan sulfate, and it is probably the O-glycosylation at Ser-64. Confined to the middle zone of embryonic epiphyseal cartilage consisting of flattened chondrocytes and the ossifying region in the limb buds of chick embryos. Has also been detected in testis.

The protein resides in the secreted. The protein localises to the extracellular space. It is found in the extracellular matrix. Its function is as follows. May have a role in bone formation and also in establishing the ordered structure of cartilage through matrix organization. The polypeptide is Epiphycan (Epyc) (Mus musculus (Mouse)).